The sequence spans 191 residues: Cytochrome c biogenesis ATP-binding export protein CcmA (191 aa).

One can recognise an ABC transporter domain in the interval 6–189 (LVATDIACRR…RVRTLAIRNF (184 aa)). ATP is bound at residue 38–45 (GANGIGKS).

Belongs to the ABC transporter superfamily. CcmA exporter (TC 3.A.1.107) family. The complex is composed of two ATP-binding proteins (CcmA) and two transmembrane proteins (CcmB).

The protein localises to the cell inner membrane. The catalysed reaction is heme b(in) + ATP + H2O = heme b(out) + ADP + phosphate + H(+). Part of the ABC transporter complex CcmAB involved in the biogenesis of c-type cytochromes; once thought to export heme, this seems not to be the case, but its exact role is uncertain. Responsible for energy coupling to the transport system. This chain is Cytochrome c biogenesis ATP-binding export protein CcmA, found in Novosphingobium aromaticivorans (strain ATCC 700278 / DSM 12444 / CCUG 56034 / CIP 105152 / NBRC 16084 / F199).